We begin with the raw amino-acid sequence, 37 residues long: Large ribosomal subunit protein bL36c (37 aa).

The protein belongs to the bacterial ribosomal protein bL36 family.

It is found in the plastid. It localises to the chloroplast. In Oenothera argillicola (Appalachian evening primrose), this protein is Large ribosomal subunit protein bL36c.